Consider the following 509-residue polypeptide: Cytochrome P450 monooxygenase CYP512U6 (509 aa).

The helical transmembrane segment at 12–29 (VFACVAVVIAIYAVRWYT) threads the bilayer. Cys-446 provides a ligand contact to heme.

It belongs to the cytochrome P450 family. Heme serves as cofactor.

The protein resides in the membrane. The catalysed reaction is ganoderate DM + reduced [NADPH--hemoprotein reductase] + O2 = hainanate A + oxidized [NADPH--hemoprotein reductase] + H2O + H(+). The enzyme catalyses ganoderate TR + reduced [NADPH--hemoprotein reductase] + O2 = ganoderate Jc + oxidized [NADPH--hemoprotein reductase] + H2O + H(+). Its pathway is secondary metabolite biosynthesis; terpenoid biosynthesis. Functionally, cytochrome P450 monooxygenase that hydroxylates the ganoderic acids DM and TR at the C-23 position to produce hainanic acid A and ganoderic acid Jc, respectively. This chain is Cytochrome P450 monooxygenase CYP512U6, found in Ganoderma lucidum (Ling zhi medicinal fungus).